Consider the following 500-residue polypeptide: NAD(P)H-quinone oxidoreductase chain 4, chloroplastic (500 aa).

The next 14 helical transmembrane spans lie at 4-24 (FPWLTILVVLPIFAGSLIFFL), 35-55 (YTIAICLLEFLIMTYAFCYHF), 87-107 (LGSILLTGFITTLATLAAWPV), 111-131 (SQLFYFLMLAMYSGQIGLFSS), 134-154 (LLLFFIMWELELIPVYLLLSM), 167-187 (FILYTAGGSIFFLIGVLGMGL), 211-231 (ILLYFGFLIAYAVKLPIIPLH), 242-262 (HYSTCMLLAGILLKMGAYGLI), 272-292 (AHYLFSPWLVIIGAVQIIYAA), 313-333 (MGFIIIGIGSITNIGLNGAIL), 334-354 (QILSHGFIGATLFFLAGTACD), 386-406 (LALPGMSGFVAELVVFFGLIT), 417-437 (LITFVMAIGMILTPIYLLSML), and 462-482 (LFLLICIFLPVIGIGIYPDFV).

It belongs to the complex I subunit 4 family.

It is found in the plastid. The protein localises to the chloroplast thylakoid membrane. It carries out the reaction a plastoquinone + NADH + (n+1) H(+)(in) = a plastoquinol + NAD(+) + n H(+)(out). The catalysed reaction is a plastoquinone + NADPH + (n+1) H(+)(in) = a plastoquinol + NADP(+) + n H(+)(out). This chain is NAD(P)H-quinone oxidoreductase chain 4, chloroplastic, found in Saccharum officinarum (Sugarcane).